The sequence spans 119 residues: UPF0102 protein Sare_1228 (119 aa).

Belongs to the UPF0102 family.

The sequence is that of UPF0102 protein Sare_1228 from Salinispora arenicola (strain CNS-205).